Consider the following 284-residue polypeptide: Zinc finger protein ZAT3 (284 aa).

Positions 1 to 12 (MNNNHSYDDRSF) are enriched in basic and acidic residues. The disordered stretch occupies residues 1–76 (MNNNHSYDDR…KPDPNAPKIT (76 aa)). The segment covering 18-37 (PSNTSNPNPNLQFALSSSYD) has biased composition (polar residues). The segment covering 47–62 (TVASSSSSSPKSASKP) has biased composition (low complexity). 3 consecutive C2H2-type zinc fingers follow at residues 77–99 (RPCT…MRCH), 162–184 (FECG…RASH), and 222–244 (HKCN…MRCH).

As to quaternary structure, interacts (via the EAR motif) with TPL. As to expression, expressed exclusively in pollen.

The protein resides in the nucleus. Its function is as follows. Mediates the regulation of male germ cell division by DUO1. The protein is Zinc finger protein ZAT3 of Arabidopsis thaliana (Mouse-ear cress).